The following is a 233-amino-acid chain: UPF0280 protein AF_0649 (233 aa).

The protein belongs to the UPF0280 family.

The protein is UPF0280 protein AF_0649 of Archaeoglobus fulgidus (strain ATCC 49558 / DSM 4304 / JCM 9628 / NBRC 100126 / VC-16).